Reading from the N-terminus, the 271-residue chain is Regulatory protein RecX (271 aa).

This sequence belongs to the RecX family.

The protein resides in the cytoplasm. Its function is as follows. Modulates RecA activity. This chain is Regulatory protein RecX, found in Lactobacillus johnsonii (strain CNCM I-12250 / La1 / NCC 533).